The following is a 335-amino-acid chain: UPF0353 protein Mvan_2751 (335 aa).

A run of 2 helical transmembrane segments spans residues 18 to 38 (WFFL…IVQM) and 67 to 87 (LPAV…AGPT). One can recognise a VWFA domain in the interval 98-294 (VVMLVIDVSQ…EQLKQVFTNL (197 aa)). Residues 309–329 (VGWLRIGSLVLALAALGALLI) form a helical membrane-spanning segment.

The protein belongs to the UPF0353 family.

It is found in the cell membrane. The sequence is that of UPF0353 protein Mvan_2751 from Mycolicibacterium vanbaalenii (strain DSM 7251 / JCM 13017 / BCRC 16820 / KCTC 9966 / NRRL B-24157 / PYR-1) (Mycobacterium vanbaalenii).